The chain runs to 653 residues: Cytidine monophosphate-N-acetylneuraminic acid hydroxylase (653 aa).

Residues 11 to 120 form the Rieske domain; that stretch reads LSPEETSELK…PEYNEDGSLD (110 aa). [2Fe-2S] cluster is bound by residues Cys-62, His-64, Cys-83, and His-86. The interval 596 to 622 is disordered; that stretch reads WNPSQATPAVEAKDPSSDSKDSATKPG. Basic and acidic residues predominate over residues 606–618; it reads EAKDPSSDSKDSA. Residues 630 to 647 form a helical membrane-spanning segment; it reads LLRPLGIVVALVGVGVAI.

It belongs to the CMP-Neu5Ac hydroxylase family. [2Fe-2S] cluster is required as a cofactor.

It localises to the membrane. It carries out the reaction CMP-N-acetyl-beta-neuraminate + 2 Fe(II)-[cytochrome b5] + O2 + 2 H(+) = CMP-N-glycoloyl-beta-neuraminate + 2 Fe(III)-[cytochrome b5] + H2O. It participates in amino-sugar metabolism; N-acetylneuraminate metabolism. In terms of biological role, sialic acids are components of carbohydrate chains of glycoconjugates and are involved in cell-cell recognition and cell-pathogen interactions. Catalyzes the conversion of CMP-N-acetylneuraminic acid (CMP-Neu5Ac) into its hydroxylated derivative CMP-N-glycolylneuraminic acid (CMP-Neu5Gc), a sialic acid abundantly expressed at the surface of many cells. This chain is Cytidine monophosphate-N-acetylneuraminic acid hydroxylase (cnh), found in Asterias rubens (Common European starfish).